Reading from the N-terminus, the 107-residue chain is UPF0473 protein LACR_0139 (107 aa).

Belongs to the UPF0473 family.

The polypeptide is UPF0473 protein LACR_0139 (Lactococcus lactis subsp. cremoris (strain SK11)).